A 384-amino-acid chain; its full sequence is Lipoprotein LprN (384 aa).

Residues methionine 1–glycine 20 form the signal peptide. Residue cysteine 21 is the site of N-palmitoyl cysteine attachment. Cysteine 21 carries the S-diacylglycerol cysteine lipid modification.

In terms of processing, lipidated upon expression in E.coli.

It localises to the cell membrane. In terms of biological role, stimulates the host (mouse) immune response; lipidated protein produced in E.coli stimulates T-cell proliferation in mice previously sensitized with LprN. Spleenocytes from these mice produce increased amounts of TNF-alpha and IFN-gamma, as well as somewhat increased nitric oxide levels, upon subsequent challenge with LprN. Previously sensitized mice infected with M.tuberculosis have an exacerbated disease response, suggesting this lipoprotein may down-regulate the host's immune response. The sequence is that of Lipoprotein LprN (lprN) from Mycobacterium tuberculosis (strain ATCC 25618 / H37Rv).